We begin with the raw amino-acid sequence, 508 residues long: Catalase (508 aa).

Catalysis depends on residues His-63 and Asn-136. A heme-binding site is contributed by Tyr-346.

The protein belongs to the catalase family. Homohexamer. The cofactor is heme.

It is found in the cytoplasm. The enzyme catalyses 2 H2O2 = O2 + 2 H2O. Its function is as follows. Decomposes hydrogen peroxide into water and oxygen; serves to protect cells from the toxic effects of hydrogen peroxide. The protein is Catalase (katA) of Haemophilus influenzae (strain ATCC 51907 / DSM 11121 / KW20 / Rd).